The following is a 525-amino-acid chain: Probable protein kinase UbiB (525 aa).

In terms of domain architecture, Protein kinase spans 119–501 (RFDHHPVASA…QRRTNRLLSA (383 aa)). ATP contacts are provided by residues 125-133 (VASASIAQV) and Lys151. Residue Asp286 is the Proton acceptor of the active site. Residues 502 to 522 (ALLFIGGFAVGIIATHVLAWL) form a helical membrane-spanning segment.

This sequence belongs to the ABC1 family. UbiB subfamily.

It is found in the cell inner membrane. The protein operates within cofactor biosynthesis; ubiquinone biosynthesis [regulation]. Is probably a protein kinase regulator of UbiI activity which is involved in aerobic coenzyme Q (ubiquinone) biosynthesis. This Ralstonia nicotianae (strain ATCC BAA-1114 / GMI1000) (Ralstonia solanacearum) protein is Probable protein kinase UbiB.